Here is a 415-residue protein sequence, read N- to C-terminus: Beta-1,4-glucuronyltransferase 1 (415 aa).

Residues 1–8 (MQMSYAIR) are Cytoplasmic-facing. Residues 9 to 36 (CAFYQLLLAALMLVAMLQLLYLSLLSGL) form a helical; Signal-anchor for type II membrane protein membrane-spanning segment. The Lumenal segment spans residues 37–415 (HGQEEQDQYF…AKYPNSPRRC (379 aa)). A glycan (N-linked (GlcNAc...) asparagine) is linked at Asn204. Residues Asp227 and Asp229 each coordinate Mn(2+). Residue Asn300 is glycosylated (N-linked (GlcNAc...) asparagine).

It belongs to the glycosyltransferase 49 family. In terms of assembly, interacts with LARGE1 and LARGE2. Requires Mn(2+) as cofactor.

It localises to the golgi apparatus membrane. It catalyses the reaction 3-O-[beta-D-Xyl-(1-&gt;4)-Rib-ol-P-Rib-ol-P-3-beta-D-GalNAc-(1-&gt;3)-beta-D-GlcNAc-(1-&gt;4)-(O-6-P-alpha-D-Man)]-Thr-[protein] + UDP-alpha-D-glucuronate = 3-O-[beta-D-GlcA-(1-&gt;3)-beta-D-Xyl-(1-&gt;4)-Rib-ol-P-Rib-ol-P-3-beta-D-GalNAc-(1-&gt;3)-beta-D-GlcNAc-(1-&gt;4)-(O-6-P-alpha-D-Man)]-Thr-[protein] + UDP + H(+). Its pathway is protein modification; protein glycosylation. Beta-1,4-glucuronyltransferase involved in O-mannosylation of alpha-dystroglycan (DAG1). Transfers a glucuronic acid (GlcA) residue onto a xylose (Xyl) acceptor to produce the glucuronyl-beta-1,4-xylose-beta disaccharide primer, which is further elongated by LARGE1, during synthesis of phosphorylated O-mannosyl glycan. Phosphorylated O-mannosyl glycan is a carbohydrate structure present in alpha-dystroglycan (DAG1), which is required for binding laminin G-like domain-containing extracellular proteins with high affinity. Required for axon guidance; via its function in O-mannosylation of alpha-dystroglycan (DAG1). The sequence is that of Beta-1,4-glucuronyltransferase 1 from Pongo abelii (Sumatran orangutan).